Consider the following 86-residue polypeptide: Co-chaperonin GroES (86 aa).

This sequence belongs to the GroES chaperonin family. In terms of assembly, heptamer of 7 subunits arranged in a ring. Interacts with the chaperonin GroEL.

Its subcellular location is the cytoplasm. In terms of biological role, together with the chaperonin GroEL, plays an essential role in assisting protein folding. The GroEL-GroES system forms a nano-cage that allows encapsulation of the non-native substrate proteins and provides a physical environment optimized to promote and accelerate protein folding. GroES binds to the apical surface of the GroEL ring, thereby capping the opening of the GroEL channel. This Campylobacter jejuni subsp. jejuni serotype O:6 (strain 81116 / NCTC 11828) protein is Co-chaperonin GroES.